Reading from the N-terminus, the 120-residue chain is Glycine cleavage system H protein (120 aa).

The region spanning 17–99 (VATVGITAHA…QGDGWLYRLK (83 aa)) is the Lipoyl-binding domain. Lys58 carries the post-translational modification N6-lipoyllysine.

The protein belongs to the GcvH family. As to quaternary structure, the glycine cleavage system is composed of four proteins: P, T, L and H. (R)-lipoate serves as cofactor.

The glycine cleavage system catalyzes the degradation of glycine. The H protein shuttles the methylamine group of glycine from the P protein to the T protein. The polypeptide is Glycine cleavage system H protein (Methylorubrum extorquens (strain PA1) (Methylobacterium extorquens)).